We begin with the raw amino-acid sequence, 471 residues long: UDP-N-acetylmuramoylalanine--D-glutamate ligase (471 aa).

An ATP-binding site is contributed by 135–141 (GTNGKTT).

The protein belongs to the MurCDEF family.

The protein resides in the cytoplasm. It carries out the reaction UDP-N-acetyl-alpha-D-muramoyl-L-alanine + D-glutamate + ATP = UDP-N-acetyl-alpha-D-muramoyl-L-alanyl-D-glutamate + ADP + phosphate + H(+). It participates in cell wall biogenesis; peptidoglycan biosynthesis. In terms of biological role, cell wall formation. Catalyzes the addition of glutamate to the nucleotide precursor UDP-N-acetylmuramoyl-L-alanine (UMA). The sequence is that of UDP-N-acetylmuramoylalanine--D-glutamate ligase from Frankia casuarinae (strain DSM 45818 / CECT 9043 / HFP020203 / CcI3).